The sequence spans 291 residues: Pca regulon regulatory protein (291 aa).

The interval 1-22 (MSDETLVNDPVNPEPARPASAA) is disordered. Positions 45–105 (MTSLARGLAV…SDGRTYSLLP (61 aa)) constitute an HTH iclR-type domain. Residues 67–86 (IAQISHRTEIPRAAVRRCLH) constitute a DNA-binding region (H-T-H motif). The IclR-ED domain occupies 120–291 (LAISAQPYLD…SRDLCHQLFG (172 aa)).

Positive regulator of all genes within the pca regulon, pcaBDC, pcaIJ and pcaF. Also required for the chemotactic response to aromatic compounds. The chain is Pca regulon regulatory protein (pcaR) from Pseudomonas putida (Arthrobacter siderocapsulatus).